A 487-amino-acid polypeptide reads, in one-letter code: PPE family protein PPE10 (487 aa).

Residues 398–424 (APVGGLDSGNPNPGSGSAAAGSGANPG) are compositionally biased toward low complexity. The segment at 398 to 487 (APVGGLDSGN…PRIGQPVGSE (90 aa)) is disordered. Residues 428 to 446 (PGTSYPSFVNSGSNDSGLR) show a composition bias toward polar residues.

It belongs to the mycobacterial PPE family.

It localises to the secreted. Plays a major role in the integrity and stability of the capsule. This is PPE family protein PPE10 (PPE10) from Mycobacterium tuberculosis (strain CDC 1551 / Oshkosh).